The primary structure comprises 62 residues: Keratin-associated protein 8-1 (62 aa).

The interval G12–C53 is 12 X 2 AA repeats of G-[YCGS].

It belongs to the KRTAP type 8 family. In terms of assembly, interacts with wool keratins. Wool.

Its function is as follows. In the wool cortex, wool keratin intermediate filaments are embedded in an interfilamentous matrix, consisting of hair keratin-associated proteins (KRTAP), which are essential for the formation of a rigid and resistant wool shaft through their extensive disulfide bond cross-linking with abundant cysteine residues of wool keratins. The matrix proteins include the high-sulfur and high-glycine-tyrosine keratins. This is Keratin-associated protein 8-1 (KRTAP8-1) from Ovis aries (Sheep).